Consider the following 102-residue polypeptide: Large ribosomal subunit protein bL28 (102 aa).

A disordered region spans residues 1–20 (MSRRCELTAKGPQVGHKVSH).

It belongs to the bacterial ribosomal protein bL28 family.

The sequence is that of Large ribosomal subunit protein bL28 from Bradyrhizobium sp. (strain ORS 278).